A 248-amino-acid chain; its full sequence is tRNA (guanine-N(1)-)-methyltransferase (248 aa).

Residues Gly113 and 133 to 138 (VGDYVL) contribute to the S-adenosyl-L-methionine site.

It belongs to the RNA methyltransferase TrmD family. Homodimer.

The protein localises to the cytoplasm. The catalysed reaction is guanosine(37) in tRNA + S-adenosyl-L-methionine = N(1)-methylguanosine(37) in tRNA + S-adenosyl-L-homocysteine + H(+). Its function is as follows. Specifically methylates guanosine-37 in various tRNAs. This is tRNA (guanine-N(1)-)-methyltransferase from Shewanella sp. (strain ANA-3).